A 156-amino-acid polypeptide reads, in one-letter code: Small ribosomal subunit protein uS7 (156 aa).

The protein belongs to the universal ribosomal protein uS7 family. In terms of assembly, part of the 30S ribosomal subunit. Contacts proteins S9 and S11.

In terms of biological role, one of the primary rRNA binding proteins, it binds directly to 16S rRNA where it nucleates assembly of the head domain of the 30S subunit. Is located at the subunit interface close to the decoding center, probably blocks exit of the E-site tRNA. The polypeptide is Small ribosomal subunit protein uS7 (Mycobacterium ulcerans (strain Agy99)).